The primary structure comprises 335 residues: Acetyl-coenzyme A carboxylase carboxyl transferase subunit alpha (335 aa).

Positions 40–294 (QLETLAARRR…KEAIEKHLNA (255 aa)) constitute a CoA carboxyltransferase C-terminal domain.

The protein belongs to the AccA family. Acetyl-CoA carboxylase is a heterohexamer composed of biotin carboxyl carrier protein (AccB), biotin carboxylase (AccC) and two subunits each of ACCase subunit alpha (AccA) and ACCase subunit beta (AccD).

The protein resides in the cytoplasm. The catalysed reaction is N(6)-carboxybiotinyl-L-lysyl-[protein] + acetyl-CoA = N(6)-biotinyl-L-lysyl-[protein] + malonyl-CoA. The protein operates within lipid metabolism; malonyl-CoA biosynthesis; malonyl-CoA from acetyl-CoA: step 1/1. In terms of biological role, component of the acetyl coenzyme A carboxylase (ACC) complex. First, biotin carboxylase catalyzes the carboxylation of biotin on its carrier protein (BCCP) and then the CO(2) group is transferred by the carboxyltransferase to acetyl-CoA to form malonyl-CoA. The polypeptide is Acetyl-coenzyme A carboxylase carboxyl transferase subunit alpha (Prochlorococcus marinus (strain MIT 9215)).